A 328-amino-acid chain; its full sequence is Hairy/enhancer-of-split related with YRPW motif-like protein (328 aa).

Residues 1–54 form a disordered region; it reads MKRPREPSGSDSESDGPIDVGREGELSQMARPLSTPSPSQMQARKKRRGIIEKR. Positions 42–111 are transcriptional repression and interaction with NCOR1 and SIN3A; it reads QARKKRRGII…GGTGFFDARA (70 aa). Residues 43–98 form the bHLH domain; sequence ARKKRRGIIEKRRRDRINSSLSELRRLVPTAFEKQGSSKLEKAEVLQMTVDHLKML. Residues 116–153 form the Orange domain; the sequence is FRSIGFRECLTEVIRYLGVLEGPSSRADPVRIRLLSHL. Residues 236–272 form a disordered region; it reads LLPSRGASSTRRARPLERPAAPLPAAPSGRATRGSHM.

The protein belongs to the HEY family. Self-associates. Interacts with GATA4, GATA6, HES1, HEY1 and HEY2. Interacts with HDAC1, NCOR1 and SIN3A.

It localises to the nucleus. Its function is as follows. Downstream effector of Notch signaling which may be required for cardiovascular development. Transcriptional repressor which binds preferentially to the canonical E box sequence 5'-CACGTG-3'. Represses transcription by the cardiac transcriptional activators GATA4 and GATA6. This Bos taurus (Bovine) protein is Hairy/enhancer-of-split related with YRPW motif-like protein (HEYL).